Here is a 317-residue protein sequence, read N- to C-terminus: sn-1-specific diacylglycerol lipase ABHD11 (317 aa).

The N-terminal 20 residues, 1-20 (MSNFAMSALCRVFTRGAPCG), are a transit peptide targeting the mitochondrion. The 236-residue stretch at 69 to 304 (PLVFLHGLFG…ASHWIHADKP (236 aa)) folds into the AB hydrolase-1 domain. Catalysis depends on charge relay system residues S142, E238, and H297.

This sequence belongs to the AB hydrolase superfamily. In terms of processing, phosphorylated.

It is found in the mitochondrion. It localises to the mitochondrion matrix. It carries out the reaction 1-octadecanoyl-2-(5Z,8Z,11Z,14Z-eicosatetraenoyl)-sn-glycerol + H2O = 2-(5Z,8Z,11Z,14Z-eicosatetraenoyl)-glycerol + octadecanoate + H(+). It catalyses the reaction a 1,2-diacyl-sn-glycerol + H2O = a 2-acylglycerol + a fatty acid + H(+). The enzyme catalyses a 1,3-diacyl-sn-glycerol + H2O = a 1-acyl-sn-glycerol + a fatty acid + H(+). The catalysed reaction is 1-octadecanoyl-2-(9Z-octadecenoyl)-sn-glycerol + H2O = 2-(9Z-octadecenoyl)-glycerol + octadecanoate + H(+). It carries out the reaction 1-octadecanoyl-2-(4Z,7Z,10Z,13Z,16Z,19Z-docosahexaenoyl)-sn-glycerol + H2O = 2-(4Z,7Z,10Z,13Z,16Z,19Z-docosahexaenoyl)-glycerol + octadecanoate + H(+). It catalyses the reaction 1,2-didecanoylglycerol + H2O = decanoylglycerol + decanoate + H(+). Catalyzes the hydrolysis of diacylglycerol in vitro and may function as a key regulator in lipid metabolism, namely by regulating the intracellular levels of diacylglycerol. 1,2-diacyl-sn-glycerols are the preferred substrate over 1,3-diacyl-sn-glycerols. The enzyme hydrolyzes stearate in preference to palmitate from the sn-1 position of 1,2-diacyl-sn-glycerols. This chain is sn-1-specific diacylglycerol lipase ABHD11, found in Danio rerio (Zebrafish).